Consider the following 209-residue polypeptide: FK506-binding protein 2B (209 aa).

The N-terminal stretch at 1-19 (MRFSLLALLGTIVATSVSA) is a signal peptide. Positions 47–136 (GDELSMHYTG…VFEVELLEIK (90 aa)) constitute a PPIase FKBP-type domain. The helical transmembrane segment at 157-177 (FTSPSFLVSTGIIVALFLIVF) threads the bilayer. Residues 178–207 (KMAKKQDIAEANEKAAAATAEASTEKKEEK) are a coiled coil. The segment at 190 to 209 (EKAAAATAEASTEKKEEKKE) is disordered. The span at 200-209 (STEKKEEKKE) shows a compositional bias: basic and acidic residues.

It belongs to the FKBP-type PPIase family. FKBP2 subfamily.

The protein localises to the membrane. It carries out the reaction [protein]-peptidylproline (omega=180) = [protein]-peptidylproline (omega=0). Inhibited by both FK506 and rapamycin. PPIases accelerate the folding of proteins. It catalyzes the cis-trans isomerization of proline imidic peptide bonds in oligopeptides. The polypeptide is FK506-binding protein 2B (FKBP3) (Rhizopus delemar (strain RA 99-880 / ATCC MYA-4621 / FGSC 9543 / NRRL 43880) (Mucormycosis agent)).